The sequence spans 902 residues: Adhesion G-protein coupled receptor D1 (902 aa).

The signal sequence occupies residues 1–25; it reads MKKLLPLCCWHSWLLLFYCDFQVRG. Residues 26 to 598 are Extracellular-facing; sequence AHTRSHVHPG…GHQVALSSIS (573 aa). 15 N-linked (GlcNAc...) asparagine glycosylation sites follow: Asn-68, Asn-76, Asn-83, Asn-89, Asn-121, Asn-183, Asn-217, Asn-310, Asn-330, Asn-337, Asn-347, Asn-422, Asn-504, Asn-529, and Asn-561. One can recognise a Pentraxin (PTX) domain in the interval 111–304; the sequence is KGVTFLYYRK…VNTMAPTNAY (194 aa). The region spanning 399 to 585 is the GAIN-B domain; the sequence is QVAIVGSSSM…AILMQVVPLE (187 aa). Intrachain disulfides connect Cys-538-Cys-567 and Cys-555-Cys-569. Residues 538–585 are GPS; the sequence is CAFLDFSSGEGIWSNQGCALTEGNLSYSICRCTHLTNFAILMQVVPLE. Residues 574-582 are stachel; the sequence is NFAILMQVV. Gln-591 provides a ligand contact to 17beta-hydroxy-5alpha-androstan-3-one. A helical transmembrane segment spans residues 599 to 619; that stretch reads YIGCSLSVLCLAITLVTFAVL. Over 620–630 the chain is Cytoplasmic; sequence SSVSTIRNQRY. Residues 631–651 form a helical membrane-spanning segment; it reads HIHANLSCAVLVAQVLLLISF. Over 652 to 661 the chain is Extracellular; that stretch reads RFEPGTAPCQ. The cysteines at positions 660 and 732 are disulfide-linked. A helical transmembrane segment spans residues 662-682; it reads VLAMLLHYFFLSAFAWMLVEG. Residues 683-702 lie on the Cytoplasmic side of the membrane; the sequence is LHLYSMVIKVFGSEDSKHRY. Residues 703-723 traverse the membrane as a helical segment; sequence YYGIGWGFPLLICIISIVFAM. The Extracellular portion of the chain corresponds to 724 to 739; sequence DSYGTSKNCWLSLGNG. The helical transmembrane segment at 740–760 threads the bilayer; that stretch reads AIWAFVAPALFIIVVNIGILI. Over 761–788 the chain is Cytoplasmic; sequence AVTRVISQISAENYKIHGDPSAFKLTAK. A helical transmembrane segment spans residues 789–809; it reads AVAVLLPILGTSWVFGVLAVN. Residues 810–812 lie on the Extracellular side of the membrane; the sequence is NQA. Residues 813–833 form a helical membrane-spanning segment; it reads MVFQYMFAILNSLQGFFIFLF. The Cytoplasmic portion of the chain corresponds to 834–902; the sequence is HCLLNSEVRA…SGHRVDLSAV (69 aa). The interval 865-902 is disordered; the sequence is KPFSSDIMNGTRPATGSTRLSPWDKSSHSGHRVDLSAV. Positions 870–884 are enriched in polar residues; that stretch reads DIMNGTRPATGSTRL. Residues 889-902 show a composition bias toward basic and acidic residues; the sequence is KSSHSGHRVDLSAV.

The protein belongs to the G-protein coupled receptor 2 family. Adhesion G-protein coupled receptor (ADGR) subfamily. In terms of assembly, heterodimer of 2 chains generated by proteolytic processing; the large extracellular N-terminal fragment and the membrane-bound C-terminal fragment predominantly remain associated and non-covalently linked. Interacts with ESYT1; interaction takes place in absence of cytosolic calcium and inhibits the G protein-coupled receptor activity of ADGRD1. Post-translationally, autoproteolytically processed at the GPS region of the GAIN-B domain; this cleavage modulates receptor activity. Cleavage takes place early in the secretory pathway before N-glycosylation.

The protein resides in the cell membrane. Its activity is regulated as follows. Forms a heterodimer of 2 chains generated by proteolytic processing that remain associated through non-covalent interactions mediated by the GAIN-B domain. In the inactivated receptor, the Stachel sequence (also named stalk) is embedded in the GAIN-B domain, where it adopts a beta-strand conformation. On activation, the Stachel moves into the 7 transmembrane region and adopts a twisted hook-shaped configuration that forms contacts within the receptor, leading to coupling of a G-alpha protein, which activates signaling. The cleaved GAIN-B and N-terminal domains can then dissociate from the rest of the receptor. Interaction with ESYT1 in absence of cytosolic calcium inhibits the G protein-coupled receptor activity; interaction and inhibition is relieved when cytosolic calcium increases. In terms of biological role, adhesion G-protein coupled receptor (aGPCR) for androgen hormone 5alpha-dihydrotestosterone (5alpha-DHT), also named 17beta-hydroxy-5alpha-androstan-3-one, the most potent hormone among androgens. Also activated by methenolone drug. Ligand binding causes a conformation change that triggers signaling via guanine nucleotide-binding proteins (G proteins) and modulates the activity of downstream effectors, such as adenylate cyclase. ADGRD1 is coupled to G(s) G proteins and mediates activation of adenylate cyclase activity. Acts as a 5alpha-DHT receptor in muscle cells, thereby increasing intracellular cyclic AMP (cAMP) levels and enhancing muscle strength. The protein is Adhesion G-protein coupled receptor D1 (ADGRD1) of Bos taurus (Bovine).